The chain runs to 668 residues: MDTASSPPSAERKRAGWSRLLGARRGSAVVKKCPFSLELAEGGPEGSTVYAPIAPTGAPGLAPPMSTPVSPAPAPADLGPRPRVSLDPRVSIYSARRPLLARTHIQGRVYNFLERPTGWKCFVYHFTVFLIVLVCLIFSVLSTIEQYAALATGTLFWMEIVLVVFFGTEYVVRLWSAGCRSKYVGIWGRLRFARKPISIIDLIVVVASMVVLCVGSKGQVFATSAIRGIRFLQILRMLHVDRQGGTWRLLGSVVFIHRQELITTLYIGFLGLIFSSYFVYLAEKDAVNESGRIEFGSYADALWWGVVTVTTIGYGDKVPQTWVGKTIASCFSVFAISFFALPAGILGSGFALKVQQKQRQKHFNRQIPAAASLIQTAWRCYAAENPDSATWKIYVRKPARSHTLLSPSPKPKKSVMVKKKKFKLDKDNGMSPGEKMFNVPHITYDPPEDRRPDHFSIDGYDSSVRKSPTLLEVSTPHFLRTNSFAEDLDLEGETLLTPITHVSQLRDHHRATIKVIRRMQYFVAKKKFQQARKPYDVRDVIEQYSQGHLNLMVRIKELQRRLDQSIGKPSLFIPISEKSKDRGSNTIGARLNRVEDKVTQLDQRLVIITDMLHQLLSMQQGGPTCNSRSQVVASNEGGSINPELFLPSNSLPTYEQLTVPQTGPDEGS.

Residues 1-119 (MDTASSPPSA…YNFLERPTGW (119 aa)) are Cytoplasmic-facing. S27 bears the Phosphoserine; by PKA mark. Residues 120-141 (KCFVYHFTVFLIVLVCLIFSVL) traverse the membrane as a helical segment. Over 142–152 (STIEQYAALAT) the chain is Extracellular. Residues 153-175 (GTLFWMEIVLVVFFGTEYVVRLW) traverse the membrane as a helical segment. Residues 176 to 191 (SAGCRSKYVGIWGRLR) lie on the Cytoplasmic side of the membrane. The chain crosses the membrane as a helical span at residues 192 to 217 (FARKPISIIDLIVVVASMVVLCVGSK). The Extracellular segment spans residues 218–225 (GQVFATSA). The helical; Voltage-sensor transmembrane segment at 226-241 (IRGIRFLQILRMLHVD) threads the bilayer. The interaction with KCNE3 stretch occupies residues 237–245 (MLHVDRQGG). The Cytoplasmic segment spans residues 242–259 (RQGGTWRLLGSVVFIHRQ). Q243 is an a 1,2-diacyl-sn-glycero-3-phospho-(1D-myo-inositol-4,5-bisphosphate) binding site. The helical transmembrane segment at 260 to 282 (ELITTLYIGFLGLIFSSYFVYLA) threads the bilayer. Residues 283–298 (EKDAVNESGRIEFGSY) lie on the Extracellular side of the membrane. The N-linked (GlcNAc...) asparagine glycan is linked to N288. The pore-forming intramembrane region spans 299-319 (ADALWWGVVTVTTIGYGDKVP). Residues 320 to 321 (QT) lie on the Extracellular side of the membrane. The chain crosses the membrane as a helical span at residues 322 to 347 (WVGKTIASCFSVFAISFFALPAGILG). Residues 348 to 668 (SGFALKVQQK…VPQTGPDEGS (321 aa)) are Cytoplasmic-facing. The interval 369–381 (AAASLIQTAWRCY) is interaction with CALM. S406 and S408 each carry phosphoserine. The interval 514 to 528 (KVIRRMQYFVAKKKF) is interaction with CALM; calcium-dependent. Residues 534 to 571 (PYDVRDVIEQYSQGHLNLMVRIKELQRRLDQSIGKPSL) are interaction with KCNE1 C-terminus. A coiled-coil region spans residues 584–620 (SNTIGARLNRVEDKVTQLDQRLVIITDMLHQLLSMQQ). The tract at residues 587–615 (IGARLNRVEDKVTQLDQRLVIITDMLHQL) is interaction with AKAP9. Residues 588–619 (GARLNRVEDKVTQLDQRLVIITDMLHQLLSMQ) are C-terminal assembly domain (tetramerization).

This sequence belongs to the potassium channel family. KQT (TC 1.A.1.15) subfamily. Kv7.1/KCNQ1 sub-subfamily. As to quaternary structure, tetramer. Heterotetramer with KCNE1; form the native cardiac channel I(Ks) which increases the amplitude and slows down the activation kinetics of outward potassium current and targets to the membrane raft. Interacts (via C-terminus) with CALM; forms a heterooctameric structure (with 4:4 KCNQ1:CALM stoichiometry) in a calcium-independent manner. Interacts with AKAP9; targets protein kinase A (PKA) catalytic and regulatory subunits and protein phosphatase 1 (PP1) to the KCNQ1-KCNE1 complex, allowing PKA-mediated phosphorylation and increase of delayed rectifier potassium channel activity. Interacts with KCNE2; form an heterooligomer complex that targets to the membrane raft and leading to currents with an apparently instantaneous activation, a rapid deactivation process and a linear current-voltage relationship and decreases the amplitude of the outward current. Interacts with AP2M1; mediates estrogen-induced internalization via clathrin-coated vesicles. Interacts with NEDD4L; promotes internalization and decreases I(Ks) currents. Interacts with USP2; counteracts the NEDD4L-specific down-regulation of I(Ks) and restore plasma membrane localization. Heterotetramer with KCNQ5; has a voltage-gated potassium channel activity. Interacts with KCNE3; four KCNE3 molecules are bound to one KCNQ1 tetramer (4:4 KCNQ1:KCNE3 stoichiometry); alters membrane raft localization; affects KCNQ1 structure and gating properties. Interacts with KCNE4; impairs KCNQ1 localization in lipid rafts and inhibits voltage-gated potassium channel activity. Interacts with KCNE5; impairs KCNQ1 localization in lipid rafts and only conducts current upon strong and continued depolarization. Interacts with SLC5A3; forms coregulatory channel-transporter complexes that modulate Na(+)-coupled myo-inositol influx through the transporter. Phosphorylation at Ser-27 by PKA; increases delayed rectifier potassium channel activity of the KCNQ1-KCNE1 complex through a macromolecular complex that includes PKA, PP1, and the targeting protein AKAP9. Post-translationally, ubiquitinated by NEDD4L; promotes internalization. The ubiquitinylated form is internalized through a clathrin-mediated endocytosis by interacting with AP2M1 and is recycled back to the cell membrane via RAB4A and RAB11A. In terms of processing, deubiquitinated by USP2; counteracts the NEDD4L-specific down-regulation of I(Ks) and restores the membrane localization. In terms of tissue distribution, expressed in heart, kidney and salivary glands. Detected in the cochlea. Almost undetectable in brain, skeletal muscle and liver. Widely expressed in embryonic and neonatal tissues. Expressed in choroid plexus epithelium (at protein level).

It is found in the cell membrane. Its subcellular location is the cytoplasmic vesicle membrane. The protein localises to the early endosome. It localises to the membrane raft. The protein resides in the endoplasmic reticulum. It is found in the basolateral cell membrane. Its subcellular location is the apical cell membrane. The catalysed reaction is K(+)(in) = K(+)(out). PIP2 molecule is essential to activate KCNQ channels by inducing the coupling of the voltage-sensing domain (VSD) and the pore-forming domain (PD). Upon channel activation, PIP2 disrupts the VSD-calmodulin/CALM interactions, causing the release of CALM from the VSD which triggers the opening of the gate. Calcium potentiates KCNQ1 channel current through calcium-bound CALM. Calcium-bound CALM competes with PIP2 to stabilize the channel open state. Its function is as follows. Pore-forming subunit of the voltage-gated potassium (Kv) channel involved in the regulation of cardiomyocyte excitability and important in normal development and functions of myocardium, inner ear, stomach and colon. Associates with KCNE beta subunits that modulates current kinetics. Induces a voltage-dependent by rapidly activating and slowly deactivating potassium-selective outward current. Also promotes a delayed voltage activated potassium current showing outward rectification characteristic. During beta-adrenergic receptor stimulation participates in cardiac increases the amplitude and slows down the activation kinetics of outward potassium current I(Ks). Muscarinic agonist oxotremorine-M strongly suppresses KCNQ1/KCNE1 current. When associated with KCNE3, forms the potassium channel that is important for cyclic AMP-stimulated intestinal secretion of chloride ions. This interaction with KCNE3 is reduced by 17beta-estradiol, resulting in the reduction of currents. During conditions of increased substrate load, maintains the driving force for proximal tubular and intestinal sodium ions absorption, gastric acid secretion, and cAMP-induced jejunal chloride ions secretion. Allows the provision of potassium ions to the luminal membrane of the secretory canaliculus in the resting state as well as during stimulated acid secretion. When associated with KCNE2, forms a heterooligomer complex leading to currents with an apparently instantaneous activation, a rapid deactivation process and a linear current-voltage relationship and decreases the amplitude of the outward current. When associated with KCNE4, inhibits voltage-gated potassium channel activity. When associated with KCNE5, this complex only conducts current upon strong and continued depolarization. Also forms a heterotetramer with KCNQ5; has a voltage-gated potassium channel activity. Binds with phosphatidylinositol 4,5-bisphosphate. KCNQ1-KCNE2 channel associates with Na(+)-coupled myo-inositol symporter in the apical membrane of choroid plexus epithelium and regulates the myo-inositol gradient between blood and cerebrospinal fluid with an impact on neuron excitability. The protein is Potassium voltage-gated channel subfamily KQT member 1 of Mus musculus (Mouse).